A 93-amino-acid polypeptide reads, in one-letter code: Large ribosomal subunit protein uL23cz/uL23cy (93 aa).

It belongs to the universal ribosomal protein uL23 family. As to quaternary structure, part of the 50S ribosomal subunit.

It is found in the plastid. Its subcellular location is the chloroplast. Its function is as follows. Binds to 23S rRNA. In Arabidopsis thaliana (Mouse-ear cress), this protein is Large ribosomal subunit protein uL23cz/uL23cy (rpl23-A).